Here is a 462-residue protein sequence, read N- to C-terminus: Argininosuccinate lyase (462 aa).

The protein belongs to the lyase 1 family. Argininosuccinate lyase subfamily.

The protein localises to the cytoplasm. It catalyses the reaction 2-(N(omega)-L-arginino)succinate = fumarate + L-arginine. It participates in amino-acid biosynthesis; L-arginine biosynthesis; L-arginine from L-ornithine and carbamoyl phosphate: step 3/3. This Leuconostoc citreum (strain KM20) protein is Argininosuccinate lyase.